The primary structure comprises 92 residues: Large ribosomal subunit protein bL27 (92 aa).

The propeptide occupies Met-1 to Phe-9. The tract at residues Gly-14 to Ala-34 is disordered.

Belongs to the bacterial ribosomal protein bL27 family. The N-terminus is cleaved by ribosomal processing cysteine protease Prp.

This Exiguobacterium sibiricum (strain DSM 17290 / CCUG 55495 / CIP 109462 / JCM 13490 / 255-15) protein is Large ribosomal subunit protein bL27.